Reading from the N-terminus, the 382-residue chain is Chaperone protein DnaJ (382 aa).

In terms of domain architecture, J spans 5–70 (DYYETLGVSR…NKRAAYDRYG (66 aa)). Residues 140–218 (GKTAQIRVPT…CHGQGRITEE (79 aa)) form a CR-type zinc finger. Zn(2+)-binding residues include Cys153, Cys156, Cys170, Cys173, Cys192, Cys195, Cys206, and Cys209. CXXCXGXG motif repeat units lie at residues 153-160 (CDVCSGSG), 170-177 (CGTCQGSG), 192-199 (CPTCHGRG), and 206-213 (CGKCHGQG).

This sequence belongs to the DnaJ family. Homodimer. Zn(2+) is required as a cofactor.

It localises to the cytoplasm. In terms of biological role, participates actively in the response to hyperosmotic and heat shock by preventing the aggregation of stress-denatured proteins and by disaggregating proteins, also in an autonomous, DnaK-independent fashion. Unfolded proteins bind initially to DnaJ; upon interaction with the DnaJ-bound protein, DnaK hydrolyzes its bound ATP, resulting in the formation of a stable complex. GrpE releases ADP from DnaK; ATP binding to DnaK triggers the release of the substrate protein, thus completing the reaction cycle. Several rounds of ATP-dependent interactions between DnaJ, DnaK and GrpE are required for fully efficient folding. Also involved, together with DnaK and GrpE, in the DNA replication of plasmids through activation of initiation proteins. The sequence is that of Chaperone protein DnaJ from Rhizobium rhizogenes (strain K84 / ATCC BAA-868) (Agrobacterium radiobacter).